The following is a 244-amino-acid chain: MSTKMQADRIADATGTDEGAVASGKSIKATYVYEAPVRLWHWVNALAIVVLAVTGFFIGSPPATRPGEASANFLMGYIRFAHFVAAYIFAIGMLGRIYWATAGNHHSRELFSVPVFTRAYWQEVISMLRWYAFLSARPSRYVGHNPLARFAMFFIFFLSSVFMILTGFAMYGEGAQMGSWQERMFGWVIPLLGQSQDVHTWHHLGMWFIVVFVIVHVYAAIREDIMGRQSVVSTMVSGYRTFKD.

The next 4 membrane-spanning stretches (helical) occupy residues 39–59 (LWHW…FFIG), 73–93 (FLMG…AIGM), 150–171 (FAMF…FAMY), and 204–221 (LGMW…YAAI).

It belongs to the HupC/HyaC/HydC family.

It localises to the cell membrane. Functionally, probable b-type cytochrome. The sequence is that of Probable Ni/Fe-hydrogenase B-type cytochrome subunit (hoxZ) from Cupriavidus necator (strain ATCC 17699 / DSM 428 / KCTC 22496 / NCIMB 10442 / H16 / Stanier 337) (Ralstonia eutropha).